A 304-amino-acid polypeptide reads, in one-letter code: Probable endonuclease 4 (304 aa).

Residues histidine 75, histidine 115, glutamate 151, aspartate 185, histidine 188, histidine 221, aspartate 234, histidine 236, and glutamate 266 each contribute to the Zn(2+) site.

This sequence belongs to the AP endonuclease 2 family. Zn(2+) is required as a cofactor.

The enzyme catalyses Endonucleolytic cleavage to 5'-phosphooligonucleotide end-products.. Functionally, endonuclease IV plays a role in DNA repair. It cleaves phosphodiester bonds at apurinic or apyrimidinic (AP) sites, generating a 3'-hydroxyl group and a 5'-terminal sugar phosphate. The polypeptide is Probable endonuclease 4 (Ureaplasma urealyticum serovar 10 (strain ATCC 33699 / Western)).